Reading from the N-terminus, the 294-residue chain is MTKKVFDDISRLALKALLYEVSLSPKPGLVDQLDNGAHDDMSFLTFVDSALALAPFFNTYLDIGFYHAKEDPGLIFERLRVSGIEAEQAMFSATKGVNTHKGVNFSLALLLGATGMYLASQPQLLAHVTAFTEEDSLAICQLVKPLTAHLLETDFGSLDLKKELTYGEKLFLDYGIKGPRGEASEGYPTIAHKALPFLRKSLRSTDQETAQLQLLVYLMSIVEDGNLIHRGGIKAWRQVKQDMLLLHNSSLSTADLKAALSAYNDKLIQKHLSPGGTADLLVLSLYFAFLENQL.

It belongs to the CitG/MdcB family.

It catalyses the reaction 3'-dephospho-CoA + ATP = 2'-(5''-triphospho-alpha-D-ribosyl)-3'-dephospho-CoA + adenine. The chain is Probable 2-(5''-triphosphoribosyl)-3'-dephosphocoenzyme-A synthase from Streptococcus equi subsp. zooepidemicus (strain H70).